The chain runs to 115 residues: Large ribosomal subunit protein bL19 (115 aa).

Belongs to the bacterial ribosomal protein bL19 family.

Its function is as follows. This protein is located at the 30S-50S ribosomal subunit interface and may play a role in the structure and function of the aminoacyl-tRNA binding site. In Kosmotoga olearia (strain ATCC BAA-1733 / DSM 21960 / TBF 19.5.1), this protein is Large ribosomal subunit protein bL19.